Consider the following 271-residue polypeptide: Formamidopyrimidine-DNA glycosylase (271 aa).

Residue proline 2 is the Schiff-base intermediate with DNA of the active site. The active-site Proton donor is glutamate 3. Lysine 58 serves as the catalytic Proton donor; for beta-elimination activity. Histidine 92, arginine 111, and arginine 152 together coordinate DNA. The FPG-type zinc finger occupies 237–271 (FVYGRQQQPCKQCGSLLRQTTIRQRTTVWCGHCQG). Arginine 261 serves as the catalytic Proton donor; for delta-elimination activity.

It belongs to the FPG family. Monomer. It depends on Zn(2+) as a cofactor.

It carries out the reaction Hydrolysis of DNA containing ring-opened 7-methylguanine residues, releasing 2,6-diamino-4-hydroxy-5-(N-methyl)formamidopyrimidine.. It catalyses the reaction 2'-deoxyribonucleotide-(2'-deoxyribose 5'-phosphate)-2'-deoxyribonucleotide-DNA = a 3'-end 2'-deoxyribonucleotide-(2,3-dehydro-2,3-deoxyribose 5'-phosphate)-DNA + a 5'-end 5'-phospho-2'-deoxyribonucleoside-DNA + H(+). In terms of biological role, involved in base excision repair of DNA damaged by oxidation or by mutagenic agents. Acts as a DNA glycosylase that recognizes and removes damaged bases. Has a preference for oxidized purines, such as 7,8-dihydro-8-oxoguanine (8-oxoG). Has AP (apurinic/apyrimidinic) lyase activity and introduces nicks in the DNA strand. Cleaves the DNA backbone by beta-delta elimination to generate a single-strand break at the site of the removed base with both 3'- and 5'-phosphates. The polypeptide is Formamidopyrimidine-DNA glycosylase (mutM1) (Xylella fastidiosa (strain 9a5c)).